Consider the following 339-residue polypeptide: Ketol-acid reductoisomerase (NADP(+)) (339 aa).

The KARI N-terminal Rossmann domain maps to 1-182 (MRVYYDRDAD…GGGRAGIIET (182 aa)). NADP(+)-binding positions include 24–27 (YGSQ), arginine 48, serine 51, threonine 53, and 83–86 (DELQ). Histidine 108 is a catalytic residue. Glycine 134 is an NADP(+) binding site. The region spanning 183 to 328 (TFKEECETDL…AKLRGMMPWI (146 aa)) is the KARI C-terminal knotted domain. Positions 191, 195, 227, and 231 each coordinate Mg(2+). Serine 252 lines the substrate pocket.

It belongs to the ketol-acid reductoisomerase family. Mg(2+) serves as cofactor.

It catalyses the reaction (2R)-2,3-dihydroxy-3-methylbutanoate + NADP(+) = (2S)-2-acetolactate + NADPH + H(+). The enzyme catalyses (2R,3R)-2,3-dihydroxy-3-methylpentanoate + NADP(+) = (S)-2-ethyl-2-hydroxy-3-oxobutanoate + NADPH + H(+). It participates in amino-acid biosynthesis; L-isoleucine biosynthesis; L-isoleucine from 2-oxobutanoate: step 2/4. Its pathway is amino-acid biosynthesis; L-valine biosynthesis; L-valine from pyruvate: step 2/4. In terms of biological role, involved in the biosynthesis of branched-chain amino acids (BCAA). Catalyzes an alkyl-migration followed by a ketol-acid reduction of (S)-2-acetolactate (S2AL) to yield (R)-2,3-dihydroxy-isovalerate. In the isomerase reaction, S2AL is rearranged via a Mg-dependent methyl migration to produce 3-hydroxy-3-methyl-2-ketobutyrate (HMKB). In the reductase reaction, this 2-ketoacid undergoes a metal-dependent reduction by NADPH to yield (R)-2,3-dihydroxy-isovalerate. The chain is Ketol-acid reductoisomerase (NADP(+)) from Methylobacterium radiotolerans (strain ATCC 27329 / DSM 1819 / JCM 2831 / NBRC 15690 / NCIMB 10815 / 0-1).